We begin with the raw amino-acid sequence, 78 residues long: Large ribosomal subunit protein bL28 (78 aa).

Residues 1-28 (MSAICQVTGRQPGYGKSVSHSHRRTSRR) are disordered.

Belongs to the bacterial ribosomal protein bL28 family.

The chain is Large ribosomal subunit protein bL28 from Corynebacterium diphtheriae (strain ATCC 700971 / NCTC 13129 / Biotype gravis).